We begin with the raw amino-acid sequence, 327 residues long: ATP-dependent (S)-NAD(P)H-hydrate dehydratase (327 aa).

The YjeF C-terminal domain maps to 11 to 313 (LLTRVKRIIP…RHVGKAYNAL (303 aa)). (6S)-NADPHX contacts are provided by residues glycine 121 and 174–180 (NVIEFKR). Residues 209–213 (KGQSD) and 228–237 (GGLKRCGGQG) each bind ATP. Aspartate 238 lines the (6S)-NADPHX pocket.

This sequence belongs to the NnrD/CARKD family. Requires Mg(2+) as cofactor.

The protein resides in the cytoplasm. It catalyses the reaction (6S)-NADHX + ATP = ADP + phosphate + NADH + H(+). The enzyme catalyses (6S)-NADPHX + ATP = ADP + phosphate + NADPH + H(+). Catalyzes the dehydration of the S-form of NAD(P)HX at the expense of ATP, which is converted to ADP. Together with NAD(P)HX epimerase, which catalyzes the epimerization of the S- and R-forms, the enzyme allows the repair of both epimers of NAD(P)HX, a damaged form of NAD(P)H that is a result of enzymatic or heat-dependent hydration. The sequence is that of ATP-dependent (S)-NAD(P)H-hydrate dehydratase from Schizosaccharomyces pombe (strain 972 / ATCC 24843) (Fission yeast).